A 694-amino-acid chain; its full sequence is DNA-binding protein RFX2 (694 aa).

Positions 174–249 (HLQWLLDNYE…YHYYGIRLKP (76 aa)) form a DNA-binding region, RFX-type winged-helix. 2 disordered regions span residues 267–310 (QQPI…QHHQ) and 658–694 (KDDV…MQEM). The segment covering 289–299 (PANSSQHASPE) has biased composition (polar residues). Low complexity predominate over residues 300-310 (QSVAAQSQHHQ).

Belongs to the RFX family. In terms of assembly, homodimer. Heterodimer; heterodimerizes with other rfx proteins. In terms of tissue distribution, preferentially expressed in ciliated tissues, such as neural tube, gastrocoel roof plate, epidermal multiciliated cells, otic vesicles and kidneys.

The protein localises to the nucleus. The protein resides in the cytoplasm. In terms of biological role, transcription factor that acts as a key regulator of ciliogenesis. Specifically regulates expression of genes required for cilium assembly and function. Recognizes and binds the X-box, a regulatory motif with DNA sequence 5'-GTNRCC(0-3N)RGYAAC-3' present on promoters. Required for neural tube closure and neural ciliogenesis. This chain is DNA-binding protein RFX2 (rfx2), found in Xenopus laevis (African clawed frog).